A 155-amino-acid polypeptide reads, in one-letter code: Small ribosomal subunit protein uS7 (155 aa).

Belongs to the universal ribosomal protein uS7 family. As to quaternary structure, part of the 30S ribosomal subunit. Contacts proteins S9 and S11.

In terms of biological role, one of the primary rRNA binding proteins, it binds directly to 16S rRNA where it nucleates assembly of the head domain of the 30S subunit. Is located at the subunit interface close to the decoding center, probably blocks exit of the E-site tRNA. The protein is Small ribosomal subunit protein uS7 of Lactococcus lactis subsp. lactis (strain IL1403) (Streptococcus lactis).